The primary structure comprises 142 residues: MILGIGTDLANIERIQGVLDRFGDRFRNRVFTDVEQAKSERRLDVAGTYAKRWAAKEACSKALGTGLRMGIAWKDMSVSNLSTGQPVMHVTGWAKARLDELTPPGHEAVIHVTLTDDHPWAQAVVMIEARPILPDVQTAQTT.

Asp-8 and Glu-57 together coordinate Mg(2+).

The protein belongs to the P-Pant transferase superfamily. AcpS family. Mg(2+) serves as cofactor.

The protein resides in the cytoplasm. The catalysed reaction is apo-[ACP] + CoA = holo-[ACP] + adenosine 3',5'-bisphosphate + H(+). In terms of biological role, transfers the 4'-phosphopantetheine moiety from coenzyme A to a Ser of acyl-carrier-protein. The protein is Holo-[acyl-carrier-protein] synthase of Ruegeria sp. (strain TM1040) (Silicibacter sp.).